A 117-amino-acid chain; its full sequence is Eukaryotic translation initiation factor 4E-binding protein (117 aa).

A phosphothreonine mark is found at T37 and T46. Residues 54-60 (YERAFMK) carry the YXXXXLphi motif; atypical motif. S65 is modified (phosphoserine). Phosphothreonine is present on T70.

The protein belongs to the eIF4E-binding protein family. Hypophosphorylated Thor/4E-BP competes with eIF4G1 to interact with eIF4E1; insulin stimulated Akt1 or Tor phosphorylation of Thor/4E-BP causes dissociation of the complex allowing eIF4G1 to bind and consequent initiation of translation. Phosphorylation at Thr-37, Thr-46, Ser-65 and Thr-70, corresponding to the hyperphosphorylated form, impairs its ability to prevent the interaction between eIF4G1 and eIF4E1, without affecting its interaction with free eIF4E1. Phosphorylated in rtesponse to insulin. Phosphorylation at Thr-46 is regulated by Tor and constitutes the major phosphorylation event that regulates activity. Widely expressed.

Functionally, repressor of translation initiation that regulates eIF4E1 activity by preventing its assembly into the eIF4F complex. Hypophosphorylated form competes with eIF4G1 and strongly binds to eIF4E1, leading to repress translation. In contrast, hyperphosphorylated form dissociates from eIF4E1, allowing interaction between eIF4G1 and eIF4E1, leading to initiation of translation. Acts as a regulator of various biological processes, such as innate immunity, cell growth or synaptic transmission. Acts downstream of phosphoinositide-3-kinase (PI3K) to regulate cell growth. Extends lifespan upon dietary restriction by regulating the mitochondrial translation. Acts as a regulator of lifespan in response to cold by regulating the mitochondrial translation. Acts as a negative regulator of presynaptic release of neurotransmitter in motor neurons: Thor expression is induced in response to insulin signaling, leading to prevent of translation of complexin (cpx), a protein known to regulate the exocytosis of synaptic vesicles. Acts as a negative regulator of synaptic strength at the neuromuscular junction: Thor expression in response to acute fasting prevents translation, thereby suppressing retrograde synaptic enhancement. This chain is Eukaryotic translation initiation factor 4E-binding protein, found in Drosophila melanogaster (Fruit fly).